Reading from the N-terminus, the 348-residue chain is Histidinol-phosphate aminotransferase (348 aa).

Position 210 is an N6-(pyridoxal phosphate)lysine (lysine 210).

Belongs to the class-II pyridoxal-phosphate-dependent aminotransferase family. Histidinol-phosphate aminotransferase subfamily. Homodimer. Pyridoxal 5'-phosphate is required as a cofactor.

The enzyme catalyses L-histidinol phosphate + 2-oxoglutarate = 3-(imidazol-4-yl)-2-oxopropyl phosphate + L-glutamate. It participates in amino-acid biosynthesis; L-histidine biosynthesis; L-histidine from 5-phospho-alpha-D-ribose 1-diphosphate: step 7/9. This chain is Histidinol-phosphate aminotransferase, found in Cytophaga hutchinsonii (strain ATCC 33406 / DSM 1761 / CIP 103989 / NBRC 15051 / NCIMB 9469 / D465).